The sequence spans 309 residues: Glutaminase (309 aa).

Substrate is bound by residues Ser64, Asn114, Glu160, Asn167, Tyr191, Tyr243, and Val261.

This sequence belongs to the glutaminase family. Homotetramer.

It catalyses the reaction L-glutamine + H2O = L-glutamate + NH4(+). The sequence is that of Glutaminase from Rhizobium etli (strain CIAT 652).